Consider the following 899-residue polypeptide: Alanine--tRNA ligase, chloroplastic/mitochondrial (899 aa).

The Zn(2+) site is built by histidine 581, histidine 585, cysteine 683, and histidine 687.

It belongs to the class-II aminoacyl-tRNA synthetase family. As to quaternary structure, monomer. Zn(2+) is required as a cofactor.

The protein localises to the plastid. It is found in the chloroplast. Its subcellular location is the mitochondrion. The catalysed reaction is tRNA(Ala) + L-alanine + ATP = L-alanyl-tRNA(Ala) + AMP + diphosphate. Its function is as follows. Catalyzes the attachment of alanine to tRNA(Ala) in a two-step reaction: alanine is first activated by ATP to form Ala-AMP and then transferred to the acceptor end of tRNA(Ala). Also edits incorrectly charged tRNA(Ala) via its editing domain. The chain is Alanine--tRNA ligase, chloroplastic/mitochondrial from Micromonas pusilla (strain CCMP1545) (Picoplanktonic green alga).